A 209-amino-acid polypeptide reads, in one-letter code: Small ribosomal subunit protein uS3c (209 aa).

In terms of domain architecture, KH type-2 spans isoleucine 39–threonine 109.

The protein belongs to the universal ribosomal protein uS3 family. In terms of assembly, part of the 30S ribosomal subunit.

Its subcellular location is the plastid. The protein localises to the chloroplast. The sequence is that of Small ribosomal subunit protein uS3c (rps3) from Gracilaria tenuistipitata (Red alga).